A 267-amino-acid chain; its full sequence is 2-keto-3-deoxy-L-rhamnonate aldolase (267 aa).

His49 (proton acceptor) is an active-site residue. Gln151 serves as a coordination point for substrate. Glu153 contacts Mg(2+). Residues Ala178 and Asp179 each coordinate substrate. A Mg(2+)-binding site is contributed by Asp179.

The protein belongs to the HpcH/HpaI aldolase family. KDR aldolase subfamily. Homohexamer. Mg(2+) serves as cofactor. Ni(2+) is required as a cofactor.

The enzyme catalyses 2-dehydro-3-deoxy-L-rhamnonate = (S)-lactaldehyde + pyruvate. The catalysed reaction is D-glyceraldehyde + 3-hydroxypyruvate = (3R,4S,5R)-3,4,5,6-tetrahydroxy-2-oxohexanoate. It carries out the reaction D-glyceraldehyde + 3-hydroxypyruvate = 2-dehydro-D-gluconate. It catalyses the reaction D-glyceraldehyde + 3-hydroxypyruvate = 2-dehydro-D-galactonate. The enzyme catalyses D-glyceraldehyde + pyruvate = 2-dehydro-3-deoxy-L-galactonate. The catalysed reaction is 2-dehydro-3-deoxy-D-gluconate = D-glyceraldehyde + pyruvate. Functionally, catalyzes the reversible retro-aldol cleavage of 2-keto-3-deoxy-L-rhamnonate (KDR) to pyruvate and lactaldehyde. 2-keto-3-deoxy-L-mannonate, 2-keto-3-deoxy-L-lyxonate and 4-hydroxy-2-ketoheptane-1,7-dioate (HKHD) are also reasonably good substrates, although 2-keto-3-deoxy-L-rhamnonate is likely to be the physiological substrate. In vitro, can catalyze the aldolisation reaction between hydroxypyruvate (HPA) or pyruvate (PA) and D-glyceraldehyde (D-GA). The condensation of hydroxypyruvate and D-glyceraldehyde produces (3R,4S,5R)-3,4,5,6-tetrahydroxy-2-oxohexanoate as the major product, 2-dehydro-D-gluconate and 2-dehydro-D-galactonate. The condensation of pyruvate and D-glyceraldehyde produces 2-dehydro-3-deoxy-L-galactonate as the major product and 2-dehydro-3-deoxy-D-gluconate. This Escherichia coli (strain K12) protein is 2-keto-3-deoxy-L-rhamnonate aldolase (rhmA).